A 338-amino-acid chain; its full sequence is Probable replication factor C subunit 2 (338 aa).

60–67 (GPPGTGKT) is an ATP binding site.

This sequence belongs to the activator 1 small subunits family. In terms of assembly, heteropentamer of various rfc subunits that forms a complex (RFC) with PCNA in the presence of ATP.

It is found in the nucleus. In terms of biological role, the elongation of primed DNA templates by DNA polymerase delta and epsilon requires the action of the accessory proteins PCNA and activator 1. In Dictyostelium discoideum (Social amoeba), this protein is Probable replication factor C subunit 2 (rfc2).